A 115-amino-acid polypeptide reads, in one-letter code: Somatostatin-2 (115 aa).

The first 18 residues, 1–18 (MKVCRIHCALALLGLALA), serve as a signal peptide directing secretion. A propeptide spanning residues 19–87 (ICSQGAASQP…KEDLRVELER (69 aa)) is cleaved from the precursor. C104 and C115 are disulfide-bonded.

It belongs to the somatostatin family.

It is found in the secreted. Its function is as follows. Somatostatin inhibits the release of somatotropin. This is Somatostatin-2 (sst2) from Oncorhynchus mykiss (Rainbow trout).